The chain runs to 403 residues: MTESTFPQYPRLVLSKGREKSLLRRHPWVFSGAVSRLEGKANLGETIDIVDHQGKWLARGAWSPASQIRARVWTFDKAESIDIAFFTRRLRQAQQWRDWLAKKDGLDSYRLIAGESDGLPGVTIDRFGHFLVLQLLSAGAEYQRAALISALQTCYPDCAIYDRSDVAVRKKEGMALTQGPVTGELPPALLPIEEHGMKLLVDIQGGHKTGYYLDQRDSRLATRRYVENQRVLNCFSYTGGFAVSALMGGCRQVVSVDTSQDALDIARQNVELNQLDLSKAEFVRDDVFKLLRAYRERGEKFDVIIMDPPKFVENKSQLMGACRGYKDINMLAIQLLNPGGILLTFSCSGLMTSDLFQKIIADAAIDAGRDVQFIEQFRQAADHPVIATYPEGLYLKGFACRVM.

Residues 9–88 (YPRLVLSKGR…ESIDIAFFTR (80 aa)) form the PUA domain.

The protein belongs to the methyltransferase superfamily. RlmI family.

It is found in the cytoplasm. It carries out the reaction cytidine(1962) in 23S rRNA + S-adenosyl-L-methionine = 5-methylcytidine(1962) in 23S rRNA + S-adenosyl-L-homocysteine + H(+). Specifically methylates the cytosine at position 1962 (m5C1962) of 23S rRNA. This is Ribosomal RNA large subunit methyltransferase I from Salmonella newport (strain SL254).